The primary structure comprises 1486 residues: Chromosome partition protein MukB (1486 aa).

34-41 (GGNGAGKS) contributes to the ATP binding site. Coiled-coil stretches lie at residues 326–418 (LEAD…QYNQ), 444–480 (LETFQAKELEATEKMLSLEQKMSMAQTAHSQFEQAYQ), and 509–603 (RHLA…RAPV). The interval 666–783 (PGGSEDQRLN…EVPLFGRAAR (118 aa)) is flexible hinge. Coiled-coil stretches lie at residues 835 to 923 (EAEI…AKLE), 977 to 1115 (EMLS…TAKA), and 1209 to 1266 (VEAI…QNVS).

It belongs to the SMC family. MukB subfamily. As to quaternary structure, homodimerization via its hinge domain. Binds to DNA via its C-terminal region. Interacts, and probably forms a ternary complex, with MukE and MukF via its C-terminal region. The complex formation is stimulated by calcium or magnesium. Interacts with tubulin-related protein FtsZ.

The protein resides in the cytoplasm. It localises to the nucleoid. In terms of biological role, plays a central role in chromosome condensation, segregation and cell cycle progression. Functions as a homodimer, which is essential for chromosome partition. Involved in negative DNA supercoiling in vivo, and by this means organize and compact chromosomes. May achieve or facilitate chromosome segregation by condensation DNA from both sides of a centrally located replisome during cell division. The sequence is that of Chromosome partition protein MukB from Escherichia coli (strain SMS-3-5 / SECEC).